Here is a 251-residue protein sequence, read N- to C-terminus: 5'-nucleotidase SurE (251 aa).

4 residues coordinate a divalent metal cation: D9, D10, S40, and N94.

Belongs to the SurE nucleotidase family. A divalent metal cation is required as a cofactor.

The protein resides in the cytoplasm. The enzyme catalyses a ribonucleoside 5'-phosphate + H2O = a ribonucleoside + phosphate. Nucleotidase that shows phosphatase activity on nucleoside 5'-monophosphates. The sequence is that of 5'-nucleotidase SurE from Aquifex aeolicus (strain VF5).